A 154-amino-acid chain; its full sequence is Nucleoside diphosphate kinase A2 (154 aa).

ATP-binding residues include lysine 13, phenylalanine 61, arginine 89, threonine 95, arginine 106, and asparagine 116. Catalysis depends on histidine 119, which acts as the Pros-phosphohistidine intermediate.

This sequence belongs to the NDK family. The cofactor is Mg(2+).

It localises to the cytoplasm. The catalysed reaction is a 2'-deoxyribonucleoside 5'-diphosphate + ATP = a 2'-deoxyribonucleoside 5'-triphosphate + ADP. It carries out the reaction a ribonucleoside 5'-diphosphate + ATP = a ribonucleoside 5'-triphosphate + ADP. Functionally, major role in the synthesis of nucleoside triphosphates other than ATP. The ATP gamma phosphate is transferred to the NDP beta phosphate via a ping-pong mechanism, using a phosphorylated active-site intermediate. This chain is Nucleoside diphosphate kinase A2, found in Xenopus laevis (African clawed frog).